The chain runs to 356 residues: Transcription factor MafB (356 aa).

Disordered regions lie at residues 49–79 (RLQP…PTEQ) and 140–240 (YRGA…LNVE). The span at 55-77 (SVSSTPISTPCSSVPSSPSFSPT) shows a compositional bias: low complexity. 2 stretches are compositionally biased toward basic residues: residues 183–196 (AHGH…HHHH) and 212–223 (HHRHHHHHHPHG). Positions 270-295 (RLKQKRRTLKNRGYAQSCRFKRVQQK) are basic motif. The 64-residue stretch at 270 to 333 (RLKQKRRTLK…DAYKLKCEKL (64 aa)) folds into the bZIP domain. The tract at residues 298-319 (LENEKTQLINQVEQLKQEINRL) is leucine-zipper.

This sequence belongs to the bZIP family. Maf subfamily. As to quaternary structure, homodimer or heterodimer with other bHLH-Zip transcription factors. Binds DNA as a homodimer or a heterodimer.

The protein resides in the nucleus. Functionally, may act as a transcriptional activator or repressor. Involved in neurogenesis. Involved in the development of rhombomeres (r) 5 and 6 segments from their common precursor 'proto-segment' in the hindbrain. The polypeptide is Transcription factor MafB (mafb) (Danio rerio (Zebrafish)).